An 88-amino-acid chain; its full sequence is Cell division topological specificity factor (88 aa).

Belongs to the MinE family.

Functionally, prevents the cell division inhibition by proteins MinC and MinD at internal division sites while permitting inhibition at polar sites. This ensures cell division at the proper site by restricting the formation of a division septum at the midpoint of the long axis of the cell. This chain is Cell division topological specificity factor, found in Shewanella denitrificans (strain OS217 / ATCC BAA-1090 / DSM 15013).